The sequence spans 79 residues: Sec-independent protein translocase protein TatA (79 aa).

The chain crosses the membrane as a helical span at residues 1–21 (MGGISIWQLLIILVIVVLLFG). A disordered region spans residues 45 to 79 (EEEKDADFEQKKQVEEKSAAEPVSTETQSDVKEKS). Residues 51–63 (DFEQKKQVEEKSA) are compositionally biased toward basic and acidic residues.

Belongs to the TatA/E family. In terms of assembly, the Tat system comprises two distinct complexes: a TatABC complex, containing multiple copies of TatA, TatB and TatC subunits, and a separate TatA complex, containing only TatA subunits. Substrates initially bind to the TatABC complex, which probably triggers association of the separate TatA complex to form the active translocon.

The protein resides in the cell inner membrane. Functionally, part of the twin-arginine translocation (Tat) system that transports large folded proteins containing a characteristic twin-arginine motif in their signal peptide across membranes. TatA could form the protein-conducting channel of the Tat system. The sequence is that of Sec-independent protein translocase protein TatA from Alteromonas mediterranea (strain DSM 17117 / CIP 110805 / LMG 28347 / Deep ecotype).